The chain runs to 79 residues: Sec-independent protein translocase protein TatA (79 aa).

Residues 1 to 21 (MGGFTSIWHWVIVLLVIVLLF) form a helical membrane-spanning segment. The interval 46-79 (DDEEEAKNEPKTLDAQATQTKVHETSEIKSKQES) is disordered. Positions 66–79 (KVHETSEIKSKQES) are enriched in basic and acidic residues.

It belongs to the TatA/E family. In terms of assembly, the Tat system comprises two distinct complexes: a TatABC complex, containing multiple copies of TatA, TatB and TatC subunits, and a separate TatA complex, containing only TatA subunits. Substrates initially bind to the TatABC complex, which probably triggers association of the separate TatA complex to form the active translocon.

It is found in the cell inner membrane. In terms of biological role, part of the twin-arginine translocation (Tat) system that transports large folded proteins containing a characteristic twin-arginine motif in their signal peptide across membranes. TatA could form the protein-conducting channel of the Tat system. The sequence is that of Sec-independent protein translocase protein TatA from Helicobacter pylori (strain HPAG1).